Reading from the N-terminus, the 99-residue chain is Bacterial microcompartment protein homohexamer (99 aa).

The BMC domain occupies 4–88 (ALGMIEVRGF…PHVNVDAALP (85 aa)).

The protein belongs to the bacterial microcompartments protein family. As to quaternary structure, homohexamer with a small central pore. When purified protein is examined by atomic force microscopy it dynamically makes uniform patches about 35 Angstroms thick with hexamers in the same orientation. In the BMC the concave side faces outward, with the N- and C-terminii exposed to the cytoplasm.

The protein localises to the bacterial microcompartment. Its function is as follows. The only hexameric shell protein in this bacterium, it forms the majority of the bacterial microcompartment (BMC) shell. Expression of 5 proteins in E.coli (BMC-H (Hoch_5815), BMC-P (Hoch_5814), and 3 BMC-T (Hoch_5812, Hoch_5816, Hoch_3341)) forms a 40 nm artificial BMC with a molecular mass of 6.5 MDa. There are 60 BMC-H hexamers per BMC. The shell facets are 20-30 Angstroms thick (a single hexamer layer), with 1 of BMC-T trimers protruding to the exterior. The chain is Bacterial microcompartment protein homohexamer from Haliangium ochraceum (strain DSM 14365 / JCM 11303 / SMP-2).